Here is a 111-residue protein sequence, read N- to C-terminus: Cytochrome c (111 aa).

An N-acetylalanine modification is found at alanine 1. The heme c site is built by cysteine 22, cysteine 25, and histidine 26. An N6,N6,N6-trimethyllysine modification is found at lysine 80. Heme c is bound at residue methionine 88. Lysine 94 bears the N6,N6,N6-trimethyllysine mark.

This sequence belongs to the cytochrome c family. Post-translationally, binds 1 heme c group covalently per subunit.

It is found in the mitochondrion intermembrane space. Functionally, electron carrier protein. The oxidized form of the cytochrome c heme group can accept an electron from the heme group of the cytochrome c1 subunit of cytochrome reductase. Cytochrome c then transfers this electron to the cytochrome oxidase complex, the final protein carrier in the mitochondrial electron-transport chain. The chain is Cytochrome c from Cannabis sativa (Hemp).